We begin with the raw amino-acid sequence, 486 residues long: Cardiolipin synthase A (486 aa).

2 consecutive transmembrane segments (helical) span residues 3 to 23 (TVYT…IAGV) and 38 to 58 (MAWL…YLAV). PLD phosphodiesterase domains lie at 219-246 (MDLR…VDPR) and 399-426 (EGGL…DMRS). Catalysis depends on residues H224, K226, D231, H404, K406, and D411.

It belongs to the phospholipase D family. Cardiolipin synthase subfamily. ClsA sub-subfamily.

It is found in the cell inner membrane. The enzyme catalyses 2 a 1,2-diacyl-sn-glycero-3-phospho-(1'-sn-glycerol) = a cardiolipin + glycerol. Functionally, catalyzes the reversible phosphatidyl group transfer from one phosphatidylglycerol molecule to another to form cardiolipin (CL) (diphosphatidylglycerol) and glycerol. The sequence is that of Cardiolipin synthase A from Escherichia coli O7:K1 (strain IAI39 / ExPEC).